The chain runs to 243 residues: Uridylate kinase (243 aa).

Residue 15–18 coordinates ATP; it reads KLSG. Residues 23 to 28 form an involved in allosteric activation by GTP region; that stretch reads GEEGFG. Glycine 57 contacts UMP. ATP contacts are provided by glycine 58 and arginine 62. UMP-binding positions include aspartate 77 and 138–145; that span reads TGNPFCTT. Residues threonine 165, tyrosine 171, and aspartate 174 each coordinate ATP.

This sequence belongs to the UMP kinase family. As to quaternary structure, homohexamer.

It localises to the cytoplasm. The enzyme catalyses UMP + ATP = UDP + ADP. It participates in pyrimidine metabolism; CTP biosynthesis via de novo pathway; UDP from UMP (UMPK route): step 1/1. Its activity is regulated as follows. Allosterically activated by GTP. Inhibited by UTP. Catalyzes the reversible phosphorylation of UMP to UDP. The polypeptide is Uridylate kinase (Shewanella denitrificans (strain OS217 / ATCC BAA-1090 / DSM 15013)).